Here is a 239-residue protein sequence, read N- to C-terminus: Pyridoxine 5'-phosphate synthase (239 aa).

N7 contributes to the 3-amino-2-oxopropyl phosphate binding site. Residue 9-10 (DH) coordinates 1-deoxy-D-xylulose 5-phosphate. A 3-amino-2-oxopropyl phosphate-binding site is contributed by R18. The active-site Proton acceptor is H43. 2 residues coordinate 1-deoxy-D-xylulose 5-phosphate: R45 and H50. Residue E70 is the Proton acceptor of the active site. T100 is a binding site for 1-deoxy-D-xylulose 5-phosphate. The Proton donor role is filled by H191. 3-amino-2-oxopropyl phosphate contacts are provided by residues G192 and 213–214 (GH).

The protein belongs to the PNP synthase family. In terms of assembly, homooctamer; tetramer of dimers.

The protein localises to the cytoplasm. It carries out the reaction 3-amino-2-oxopropyl phosphate + 1-deoxy-D-xylulose 5-phosphate = pyridoxine 5'-phosphate + phosphate + 2 H2O + H(+). It participates in cofactor biosynthesis; pyridoxine 5'-phosphate biosynthesis; pyridoxine 5'-phosphate from D-erythrose 4-phosphate: step 5/5. Functionally, catalyzes the complicated ring closure reaction between the two acyclic compounds 1-deoxy-D-xylulose-5-phosphate (DXP) and 3-amino-2-oxopropyl phosphate (1-amino-acetone-3-phosphate or AAP) to form pyridoxine 5'-phosphate (PNP) and inorganic phosphate. This is Pyridoxine 5'-phosphate synthase from Nostoc sp. (strain PCC 7120 / SAG 25.82 / UTEX 2576).